A 202-amino-acid chain; its full sequence is Coiled-coil domain-containing protein 85B (202 aa).

The residue at position 1 (M1) is an N-acetylmethionine. Coiled-coil stretches lie at residues 44 to 82 and 118 to 141; these read RLMQEVNRQLQGHLGEIRELKQLNRRLQAENRELRDLCC and QKLAELEGRQEELLRENLALKELC. The span at 152 to 162 shows a compositional bias: gly residues; that stretch reads GGPGGAVGSGA. The disordered stretch occupies residues 152–202; that stretch reads GGPGGAVGSGAGPTPELALPPCGPRDLGDGSSSTGSVGSPDQLPLACSPDD. Low complexity predominate over residues 180–190; the sequence is DGSSSTGSVGS.

This sequence belongs to the CCDC85 family. In terms of assembly, interacts with CEBPB. May interact with CEBPD. Interacts with EURL. Interacts with MCRS1. Interacts with TCF7L2; competes with CTNNB1. Interacts with ANKRD26. Interacts with the beta-catenin family proteins ARVCF, CTNND1, CTNND2 and PKP4. As to expression, expressed in white and brown adipose tissue.

It is found in the nucleus. Its subcellular location is the cytoplasm. The protein localises to the cytoskeleton. The protein resides in the microtubule organizing center. It localises to the centrosome. It is found in the cell junction. Its subcellular location is the adherens junction. Its function is as follows. Functions as a transcriptional repressor. May inhibit the activity of CTNNB1 in a TP53-dependent manner and thus regulate cell growth. May function in adipocyte differentiation, negatively regulating mitotic clonal expansion. Plays a role in cell-cell adhesion and epithelium development through its interaction with proteins of the beta-catenin family. This Mus musculus (Mouse) protein is Coiled-coil domain-containing protein 85B (Ccdc85b).